The primary structure comprises 279 residues: NAD kinase (279 aa).

The Proton acceptor role is filled by Asp-57. NAD(+) contacts are provided by residues 57 to 58 (DG), 133 to 134 (NE), Arg-159, Asp-161, 172 to 177 (TAYNKS), and Ala-196.

It belongs to the NAD kinase family. A divalent metal cation serves as cofactor.

Its subcellular location is the cytoplasm. The enzyme catalyses NAD(+) + ATP = ADP + NADP(+) + H(+). In terms of biological role, involved in the regulation of the intracellular balance of NAD and NADP, and is a key enzyme in the biosynthesis of NADP. Catalyzes specifically the phosphorylation on 2'-hydroxyl of the adenosine moiety of NAD to yield NADP. In Streptococcus thermophilus (strain CNRZ 1066), this protein is NAD kinase.